The primary structure comprises 335 residues: Cathepsin B (335 aa).

A signal peptide spans 1–17 (MWRLLATLSCLLVLTSA). The propeptide at 18–79 (RSSLYFPPLS…QRDAFAADVV (62 aa)) is activation peptide. 6 disulfides stabilise this stretch: C93-C122, C105-C150, C141-C207, C142-C146, C179-C211, and C187-C198. Residue C108 is part of the active site. The N-linked (GlcNAc...) asparagine glycan is linked to N192. K220 is modified (N6-acetyllysine). The cysteines at positions 227 and 331 are disulfide-linked. Active-site residues include H278 and N298. Positions 333 to 335 (HQY) are excised as a propeptide.

This sequence belongs to the peptidase C1 family. Dimer of a heavy chain and a light chain cross-linked by a disulfide bond. Interacts with SRPX2. Directly interacts with SHKBP1. In terms of tissue distribution, expressed in myoblasts, the myotube, fibroblasts and fetal muscle (at protein level). Expressed in the spleen (at protein level).

It localises to the lysosome. Its subcellular location is the melanosome. The protein localises to the secreted. The protein resides in the extracellular space. It is found in the apical cell membrane. The enzyme catalyses Hydrolysis of proteins with broad specificity for peptide bonds. Preferentially cleaves -Arg-Arg-|-Xaa bonds in small molecule substrates (thus differing from cathepsin L). In addition to being an endopeptidase, shows peptidyl-dipeptidase activity, liberating C-terminal dipeptides.. Its function is as follows. Thiol protease which is believed to participate in intracellular degradation and turnover of proteins. Cleaves matrix extracellular phosphoglycoprotein MEPE. Involved in the solubilization of cross-linked TG/thyroglobulin in the thyroid follicle lumen. Has also been implicated in tumor invasion and metastasis. This is Cathepsin B (CTSB) from Bos taurus (Bovine).